Here is a 456-residue protein sequence, read N- to C-terminus: MENKPSVLTERYEVGRLLGQGTFAKVYFGRSNHTNESVAIKMIDKDKVMRVGLSQQIKREISVMRIAKHPNVVELYEVMATKSRIYFVIEYCKGGELFNKVAKGKLKEDVAWKYFYQLISAVDFCHSRGVYHRDIKPENLLLDDNDNLKVSDFGLSALADCKRQDGLLHTTCGTPAYVAPEVINRKGYEGTKADIWSCGVVLFVLLAGYLPFHDTNLMEMYRKIGKADFKCPSWFAPEVKRLLCKMLDPNHETRITIAKIKESSWFRKGLHLKQKKMEKMEKQQVREATNPMEAGGSGQNENGENHEPPRLATLNAFDIIALSTGFGLAGLFGDVYDKRESRFASQKPASEIISKLVEVAKCLKLKIRKQGAGLFKLERVKEGKNGILTMDAEIFQVTPTFHLVEVKKCNGDTMEYQKLVEEDLRPALADIVWVWQGEKEKEEQLLQDEQGEQEPS.

Residues 12 to 266 form the Protein kinase domain; the sequence is YEVGRLLGQG…IAKIKESSWF (255 aa). Residues 18 to 26 and Lys41 each bind ATP; that span reads LGQGTFAKV. Residue Asp134 is the Proton acceptor of the active site. The segment at 152-181 is activation loop; sequence DFGLSALADCKRQDGLLHTTCGTPAYVAPE. Ser156 bears the Phosphoserine mark. Position 170 is a phosphothreonine (Thr170). The tract at residues 280–309 is disordered; it reads MEKQQVREATNPMEAGGSGQNENGENHEPP. Positions 309–333 constitute an NAF domain; it reads PRLATLNAFDIIALSTGFGLAGLFG. The segment at 338 to 367 is PPI; the sequence is KRESRFASQKPASEIISKLVEVAKCLKLKI.

The protein belongs to the protein kinase superfamily. CAMK Ser/Thr protein kinase family. SNF1 subfamily. Interacts with CBL2, CBL3 and CBL5. The cofactor is Mn(2+).

It carries out the reaction L-seryl-[protein] + ATP = O-phospho-L-seryl-[protein] + ADP + H(+). The enzyme catalyses L-threonyl-[protein] + ATP = O-phospho-L-threonyl-[protein] + ADP + H(+). Its function is as follows. CIPK serine-threonine protein kinases interact with CBL proteins. Binding of a CBL protein to the regulatory NAF domain of CIPK protein lead to the activation of the kinase in a calcium-dependent manner. This chain is CBL-interacting serine/threonine-protein kinase 2 (CIPK2), found in Arabidopsis thaliana (Mouse-ear cress).